A 317-amino-acid polypeptide reads, in one-letter code: 2,3-dihydroxyphenylpropionate/2,3-dihydroxicinnamic acid 1,2-dioxygenase (317 aa).

H115 functions as the Proton donor in the catalytic mechanism. The Proton acceptor role is filled by H179.

It belongs to the LigB/MhpB extradiol dioxygenase family. In terms of assembly, homotetramer. The cofactor is Fe(2+).

It catalyses the reaction 3-(2,3-dihydroxyphenyl)propanoate + O2 = (2Z,4E)-2-hydroxy-6-oxonona-2,4-dienedioate + H(+). The enzyme catalyses (2E)-3-(2,3-dihydroxyphenyl)prop-2-enoate + O2 = (2Z,4E,7E)-2-hydroxy-6-oxonona-2,4,7-trienedioate + H(+). It functions in the pathway aromatic compound metabolism; 3-phenylpropanoate degradation. Its function is as follows. Catalyzes the non-heme iron(II)-dependent oxidative cleavage of 2,3-dihydroxyphenylpropionic acid and 2,3-dihydroxicinnamic acid into 2-hydroxy-6-ketononadienedioate and 2-hydroxy-6-ketononatrienedioate, respectively. This is 2,3-dihydroxyphenylpropionate/2,3-dihydroxicinnamic acid 1,2-dioxygenase from Photorhabdus laumondii subsp. laumondii (strain DSM 15139 / CIP 105565 / TT01) (Photorhabdus luminescens subsp. laumondii).